Consider the following 172-residue polypeptide: 3-phenylpropionate/cinnamic acid dioxygenase subunit beta (172 aa).

The protein belongs to the bacterial ring-hydroxylating dioxygenase beta subunit family. In terms of assembly, this dioxygenase system consists of four proteins: the two subunits of the hydroxylase component (HcaE and HcaF), a ferredoxin (HcaC) and a ferredoxin reductase (HcaD).

The catalysed reaction is 3-phenylpropanoate + NADH + O2 + H(+) = 3-(cis-5,6-dihydroxycyclohexa-1,3-dien-1-yl)propanoate + NAD(+). The enzyme catalyses (E)-cinnamate + NADH + O2 + H(+) = (2E)-3-(cis-5,6-dihydroxycyclohexa-1,3-dien-1-yl)prop-2-enoate + NAD(+). It functions in the pathway aromatic compound metabolism; 3-phenylpropanoate degradation. In terms of biological role, part of the multicomponent 3-phenylpropionate dioxygenase. Converts 3-phenylpropionic acid (PP) and cinnamic acid (CI) into 3-phenylpropionate-dihydrodiol (PP-dihydrodiol) and cinnamic acid-dihydrodiol (CI-dihydrodiol), respectively. This chain is 3-phenylpropionate/cinnamic acid dioxygenase subunit beta, found in Shigella boydii serotype 4 (strain Sb227).